The chain runs to 206 residues: Uridine kinase (206 aa).

9-16 (GGSGSGKT) is an ATP binding site.

This sequence belongs to the uridine kinase family. As to quaternary structure, monomer.

The protein resides in the cytoplasm. The enzyme catalyses uridine + ATP = UMP + ADP + H(+). The catalysed reaction is cytidine + ATP = CMP + ADP + H(+). It functions in the pathway pyrimidine metabolism; CTP biosynthesis via salvage pathway; CTP from cytidine: step 1/3. The protein operates within pyrimidine metabolism; UMP biosynthesis via salvage pathway; UMP from uridine: step 1/1. The chain is Uridine kinase (udk) from Borreliella burgdorferi (strain ATCC 35210 / DSM 4680 / CIP 102532 / B31) (Borrelia burgdorferi).